We begin with the raw amino-acid sequence, 304 residues long: Putative dihydroorotate dehydrogenase A (fumarate) (304 aa).

Residues serine 22 and 46–47 (KG) contribute to the FMN site. Residues lysine 46 and 70 to 74 (NSVGL) contribute to the substrate site. The FMN site is built by asparagine 100 and asparagine 128. A substrate-binding site is contributed by asparagine 128. Residue cysteine 131 is the Nucleophile of the active site. FMN is bound by residues lysine 166 and valine 192. Residue 193–194 (NT) coordinates substrate. FMN contacts are provided by residues glycine 218, 244-245 (GG), and 266-267 (GT).

Belongs to the dihydroorotate dehydrogenase family. Type 1 subfamily. Homodimer. Requires FMN as cofactor.

Its subcellular location is the cytoplasm. The enzyme catalyses (S)-dihydroorotate + fumarate = orotate + succinate. It functions in the pathway pyrimidine metabolism; UMP biosynthesis via de novo pathway. In terms of biological role, catalyzes the conversion of dihydroorotate to orotate with fumarate as the electron acceptor. This Solibacter usitatus (strain Ellin6076) protein is Putative dihydroorotate dehydrogenase A (fumarate) (pyrD).